The following is a 505-amino-acid chain: Maturase K (505 aa).

It belongs to the intron maturase 2 family. MatK subfamily.

The protein localises to the plastid. It is found in the chloroplast. Usually encoded in the trnK tRNA gene intron. Probably assists in splicing its own and other chloroplast group II introns. The chain is Maturase K from Dioon edule (Virgin's palm).